A 427-amino-acid polypeptide reads, in one-letter code: Peptidase B (427 aa).

Mn(2+) contacts are provided by lysine 195 and aspartate 200. Residue lysine 207 is part of the active site. The Mn(2+) site is built by aspartate 218, aspartate 277, and glutamate 279. Arginine 281 is a catalytic residue.

It belongs to the peptidase M17 family. Homohexamer. It depends on Mn(2+) as a cofactor.

It localises to the cytoplasm. It catalyses the reaction Release of an N-terminal amino acid, Xaa, from a peptide or arylamide. Xaa is preferably Glu or Asp but may be other amino acids, including Leu, Met, His, Cys and Gln.. Probably plays an important role in intracellular peptide degradation. In Escherichia coli O7:K1 (strain IAI39 / ExPEC), this protein is Peptidase B.